The chain runs to 100 residues: MHAIVVCGSKQYLVHENDTFFVEKLEAPVGKEIQLDKVLMLDEKIGAPYLEKARVVCVVEKHGLQRKVNVIKHISQKHHLKKYGHRQPYTKLKVVRFVHD.

The protein belongs to the bacterial ribosomal protein bL21 family. In terms of assembly, part of the 50S ribosomal subunit. Contacts protein L20.

This protein binds to 23S rRNA in the presence of protein L20. The polypeptide is Large ribosomal subunit protein bL21 (Mycoplasma pneumoniae (strain ATCC 29342 / M129 / Subtype 1) (Mycoplasmoides pneumoniae)).